The following is a 287-amino-acid chain: Ribosomal RNA small subunit methyltransferase I (287 aa).

The protein belongs to the methyltransferase superfamily. RsmI family.

The protein resides in the cytoplasm. It catalyses the reaction cytidine(1402) in 16S rRNA + S-adenosyl-L-methionine = 2'-O-methylcytidine(1402) in 16S rRNA + S-adenosyl-L-homocysteine + H(+). In terms of biological role, catalyzes the 2'-O-methylation of the ribose of cytidine 1402 (C1402) in 16S rRNA. In Streptococcus pyogenes serotype M1, this protein is Ribosomal RNA small subunit methyltransferase I.